A 225-amino-acid chain; its full sequence is UPF0758 protein Shewmr7_0359 (225 aa).

Residues 102-224 (VLTNPDLTRD…IVSFAERGWI (123 aa)) enclose the MPN domain. Positions 173, 175, and 186 each coordinate Zn(2+). Positions 173–186 (HNHPSGIAEPSQAD) match the JAMM motif motif.

This sequence belongs to the UPF0758 family.

The chain is UPF0758 protein Shewmr7_0359 from Shewanella sp. (strain MR-7).